Consider the following 177-residue polypeptide: MKLPKEGDFITIQSYKHDGSLHRTWRDTMVLKTTENAVIGVNDHTLVTESDGRRWVTREPAIVYFHKKFWFNIIAMIRDNGVSYYCNLASPYIMDQEALKYIDYDLDVKVFADGEKKLLDVDEYELHKQKMGYSSDIDYILKENVKILVDWINNGKGPFSQSYINIWYKRYLELKNR.

Arginine 23 (proton donor) is an active-site residue. Asparagine 87, aspartate 103, aspartate 105, aspartate 107, aspartate 120, and glutamate 123 together coordinate Mg(2+).

Belongs to the Ntdp family. Mg(2+) is required as a cofactor.

The enzyme catalyses a ribonucleoside 5'-triphosphate + H2O = a ribonucleoside 5'-diphosphate + phosphate + H(+). The catalysed reaction is a ribonucleoside 5'-diphosphate + H2O = a ribonucleoside 5'-phosphate + phosphate + H(+). Has nucleoside phosphatase activity towards nucleoside triphosphates and nucleoside diphosphates. This chain is Nucleoside triphosphate/diphosphate phosphatase, found in Streptococcus mutans serotype c (strain ATCC 700610 / UA159).